Here is a 398-residue protein sequence, read N- to C-terminus: Elongation factor Tu (398 aa).

One can recognise a tr-type G domain in the interval 10 to 207; it reads KPHVNIGTIG…TVDEYIPEPE (198 aa). The G1 stretch occupies residues 19-26; it reads GHVDHGKT. 19 to 26 contributes to the GTP binding site; that stretch reads GHVDHGKT. Position 26 (T26) interacts with Mg(2+). Residues 63 to 67 are G2; that stretch reads GITIN. A G3 region spans residues 84–87; it reads DAPG. Residues 84–88 and 139–142 contribute to the GTP site; these read DAPGH and NKVD. A G4 region spans residues 139 to 142; the sequence is NKVD. Residues 177–179 form a G5 region; that stretch reads SAL.

It belongs to the TRAFAC class translation factor GTPase superfamily. Classic translation factor GTPase family. EF-Tu/EF-1A subfamily. As to quaternary structure, monomer.

Its subcellular location is the cytoplasm. It catalyses the reaction GTP + H2O = GDP + phosphate + H(+). Functionally, GTP hydrolase that promotes the GTP-dependent binding of aminoacyl-tRNA to the A-site of ribosomes during protein biosynthesis. This is Elongation factor Tu from Streptococcus pneumoniae serotype 4 (strain ATCC BAA-334 / TIGR4).